The chain runs to 95 residues: uncharacterized protein (95 aa).

Lysine 21 is a binding site for phosphate. Residue aspartate 44 coordinates Mg(2+). A phosphate-binding site is contributed by asparagine 47.

The protein belongs to the HAD-like hydrolase superfamily. Cof family. Mg(2+) serves as cofactor.

This is an uncharacterized protein from Geobacillus stearothermophilus (Bacillus stearothermophilus).